The sequence spans 450 residues: 5-amino-6-(D-ribitylamino)uracil--L-tyrosine 4-hydroxyphenyl transferase (450 aa).

Positions 1–24 are disordered; the sequence is MPDVPETVGTPDGSTEFEHRPTTD. The region spanning 82 to 350 is the Radical SAM core domain; sequence VTFVANLNNN…MIAVSRLFLD (269 aa). Positions 96, 100, and 103 each coordinate [4Fe-4S] cluster. Residues 430–450 form a disordered region; the sequence is PDADVLGPQLGPRADGTPLLD.

It belongs to the radical SAM superfamily. CofH family. As to quaternary structure, consists of two subunits, CofG and CofH. [4Fe-4S] cluster serves as cofactor.

It catalyses the reaction 5-amino-6-(D-ribitylamino)uracil + L-tyrosine + S-adenosyl-L-methionine = 5-amino-5-(4-hydroxybenzyl)-6-(D-ribitylimino)-5,6-dihydrouracil + 2-iminoacetate + 5'-deoxyadenosine + L-methionine + H(+). It participates in cofactor biosynthesis; coenzyme F0 biosynthesis. Its function is as follows. Catalyzes the radical-mediated synthesis of 5-amino-5-(4-hydroxybenzyl)-6-(D-ribitylimino)-5,6-dihydrouracil from 5-amino-6-(D-ribitylamino)uracil and L-tyrosine. The protein is 5-amino-6-(D-ribitylamino)uracil--L-tyrosine 4-hydroxyphenyl transferase of Haloarcula marismortui (strain ATCC 43049 / DSM 3752 / JCM 8966 / VKM B-1809) (Halobacterium marismortui).